The sequence spans 468 residues: 3-isopropylmalate dehydratase large subunit (468 aa).

The [4Fe-4S] cluster site is built by cysteine 347, cysteine 408, and cysteine 411.

Belongs to the aconitase/IPM isomerase family. LeuC type 1 subfamily. As to quaternary structure, heterodimer of LeuC and LeuD. The cofactor is [4Fe-4S] cluster.

The catalysed reaction is (2R,3S)-3-isopropylmalate = (2S)-2-isopropylmalate. The protein operates within amino-acid biosynthesis; L-leucine biosynthesis; L-leucine from 3-methyl-2-oxobutanoate: step 2/4. Functionally, catalyzes the isomerization between 2-isopropylmalate and 3-isopropylmalate, via the formation of 2-isopropylmaleate. The protein is 3-isopropylmalate dehydratase large subunit of Janthinobacterium sp. (strain Marseille) (Minibacterium massiliensis).